A 600-amino-acid polypeptide reads, in one-letter code: Elongation factor 4 (600 aa).

Residues serine 4–tyrosine 186 enclose the tr-type G domain. Residues aspartate 16–threonine 21 and asparagine 133–aspartate 136 each bind GTP.

This sequence belongs to the TRAFAC class translation factor GTPase superfamily. Classic translation factor GTPase family. LepA subfamily.

It is found in the cell membrane. It carries out the reaction GTP + H2O = GDP + phosphate + H(+). Required for accurate and efficient protein synthesis under certain stress conditions. May act as a fidelity factor of the translation reaction, by catalyzing a one-codon backward translocation of tRNAs on improperly translocated ribosomes. Back-translocation proceeds from a post-translocation (POST) complex to a pre-translocation (PRE) complex, thus giving elongation factor G a second chance to translocate the tRNAs correctly. Binds to ribosomes in a GTP-dependent manner. The sequence is that of Elongation factor 4 from Mesoplasma florum (strain ATCC 33453 / NBRC 100688 / NCTC 11704 / L1) (Acholeplasma florum).